Reading from the N-terminus, the 252-residue chain is MERVLIVNADDFGLSKGQNYGIVEAYRNGVVTSTTALVNGEAIDHAAQLSRELPALGVGIHFVLTLGKPVSEMPGLTRDGLLGKWIWQMAEEDTLPLDEIAHELACQYQRFIDVFGREPTHLDSHHHVHMFPQIFPIVARFAAQRGIALRIDRQTVLNADDLPSDLRSTQGFSSEFYGEEITEACFLRILDASAHRGEASLEVMCHPAFVDNIIRQSAYCYPRLTELEVLTSASLKAAIAERGYRPGSFLDI.

The Mg(2+) site is built by His-61 and His-125.

It belongs to the YdjC deacetylase family. ChbG subfamily. In terms of assembly, homodimer. It depends on Mg(2+) as a cofactor.

The protein localises to the cytoplasm. It carries out the reaction N,N'-diacetylchitobiose + H2O = N-acetyl-beta-D-glucosaminyl-(1-&gt;4)-D-glucosamine + acetate. It catalyses the reaction diacetylchitobiose-6'-phosphate + H2O = N'-monoacetylchitobiose-6'-phosphate + acetate. The protein operates within glycan degradation; chitin degradation. In terms of biological role, involved in the degradation of chitin. ChbG is essential for growth on the acetylated chitooligosaccharides chitobiose and chitotriose but is dispensable for growth on cellobiose and chitosan dimer, the deacetylated form of chitobiose. Deacetylation of chitobiose-6-P and chitotriose-6-P is necessary for both the activation of the chb promoter by the regulatory protein ChbR and the hydrolysis of phosphorylated beta-glucosides by the phospho-beta-glucosidase ChbF. Catalyzes the removal of only one acetyl group from chitobiose-6-P to yield monoacetylchitobiose-6-P, the inducer of ChbR and the substrate of ChbF. This chain is Chitooligosaccharide deacetylase, found in Salmonella paratyphi B (strain ATCC BAA-1250 / SPB7).